The primary structure comprises 73 residues: Beta-defensin 108B (73 aa).

Positions 1–22 are cleaved as a signal peptide; the sequence is MRIAVLLFAIFFFMSQVLPARG. Intrachain disulfides connect Cys-28–Cys-55, Cys-35–Cys-49, and Cys-39–Cys-56.

Belongs to the beta-defensin family. As to expression, specifically expressed in testis. Low expression is detected also in liver.

It localises to the secreted. Has antibacterial activity. This chain is Beta-defensin 108B (DEFB108B), found in Homo sapiens (Human).